The chain runs to 1214 residues: RNA-directed RNA polymerase VP1 (1214 aa).

The RdRp catalytic domain maps to 610-805 (APHDVMAPQL…KRTIVGNNVA (196 aa)).

It belongs to the reoviridae RNA-directed RNA polymerase family.

Its subcellular location is the virion. It carries out the reaction RNA(n) + a ribonucleoside 5'-triphosphate = RNA(n+1) + diphosphate. Functionally, RNA-directed RNA polymerase that is involved in transcription and genome replication. Following infection, it catalyzes the synthesis of fully conservative plus strands. After core assembly, which consists in recruitment of one capped plus-strand for each genomic segments and polymerase complexes, the polymerase switches mode and catalyzes the synthesis of complementary minus-strands. The chain is RNA-directed RNA polymerase VP1 (Segment-1) from Banna virus (BAV).